A 253-amino-acid polypeptide reads, in one-letter code: TCF3 fusion partner (253 aa).

Disordered stretches follow at residues 49-72 and 142-211; these read SGGL…GRRR and DEGS…PELA. The residue at position 167 (serine 167) is a Phosphoserine. Positions 170–181 are enriched in pro residues; it reads RRTPAPPEPGSP. Threonine 172 carries the post-translational modification Phosphothreonine. Phosphoserine is present on residues serine 180 and serine 188. Threonine 207 is subject to Phosphothreonine. Residue lysine 216 forms a Glycyl lysine isopeptide (Lys-Gly) (interchain with G-Cter in SUMO2) linkage. The disordered stretch occupies residues 234–253; sequence VSRGPDKLLPYPTLASPASD. 2 positions are modified to phosphoserine: serine 249 and serine 252.

Interacts with NOL3; translocates NOL3 into the nucleus and negatively regulated TFPT-induced cell death. Component of the chromatin remodeling INO80 complex; specifically part of a complex module associated with the N-terminus of INO80.

The protein localises to the nucleus. Appears to promote apoptosis in a p53/TP53-independent manner. Functionally, putative regulatory component of the chromatin remodeling INO80 complex which is involved in transcriptional regulation, DNA replication and probably DNA repair. The protein is TCF3 fusion partner (TFPT) of Homo sapiens (Human).